We begin with the raw amino-acid sequence, 220 residues long: Respiratory supercomplex factor 1, mitochondrial (220 aa).

The HIG1 domain occupies 13-104 (MPSSFDENHE…KDREATKELR (92 aa)). 2 helical membrane-spanning segments follow: residues 41 to 57 (LIPL…TQAW) and 76 to 93 (VAAQ…SMYY). Positions 91–145 (MYYNKDREATKELRKLKEERDSEEKRQKWIRELEIRDEEDKAMRARVMNRRAKAE) form a coiled coil. The disordered stretch occupies residues 139-220 (NRRAKAEEAK…RVSAEDDKTN (82 aa)). Low complexity predominate over residues 164–179 (SGVLNALGLSGSSSGW).

It belongs to the RCF1 family. Associates with the respiratory chain complex III/complex IV supercomplex.

It is found in the mitochondrion membrane. Its function is as follows. Cytochrome c oxidase subunit which plays a role in assembly of respiratory supercomplexes. This is Respiratory supercomplex factor 1, mitochondrial (RCF1) from Verticillium alfalfae (strain VaMs.102 / ATCC MYA-4576 / FGSC 10136) (Verticillium wilt of alfalfa).